The chain runs to 180 residues: Peroxisome assembly protein 22 (180 aa).

The helical transmembrane segment at 15–32 (LGIVGTAIAVLVTSYYIY) threads the bilayer.

It belongs to the peroxin-22 family.

The protein resides in the peroxisome membrane. Functionally, involved in peroxisome biogenesis. The protein is Peroxisome assembly protein 22 (PEX22) of Saccharomyces cerevisiae (strain ATCC 204508 / S288c) (Baker's yeast).